The following is a 62-amino-acid chain: Photosystem II reaction center protein Z (62 aa).

2 helical membrane passes run 8 to 28 (TMFALIAISFLLIIGVPITFA) and 41 to 61 (FSGVSLWIVLVFAVGILNSFI).

Belongs to the PsbZ family. PSII is composed of 1 copy each of membrane proteins PsbA, PsbB, PsbC, PsbD, PsbE, PsbF, PsbH, PsbI, PsbJ, PsbK, PsbL, PsbM, PsbT, PsbY, PsbZ, Psb30/Ycf12, at least 3 peripheral proteins of the oxygen-evolving complex and a large number of cofactors. It forms dimeric complexes.

The protein localises to the plastid. The protein resides in the chloroplast thylakoid membrane. May control the interaction of photosystem II (PSII) cores with the light-harvesting antenna, regulates electron flow through the 2 photosystem reaction centers. PSII is a light-driven water plastoquinone oxidoreductase, using light energy to abstract electrons from H(2)O, generating a proton gradient subsequently used for ATP formation. The protein is Photosystem II reaction center protein Z of Welwitschia mirabilis (Tree tumbo).